We begin with the raw amino-acid sequence, 708 residues long: Leukotoxin translocation ATP-binding protein LktB (708 aa).

The 126-residue stretch at 1–126 (MEANHQRNDL…ACYQGQLILV (126 aa)) folds into the Peptidase C39 domain. The region spanning 155–437 (FLETLIVSIF…LAQLWQDFQQ (283 aa)) is the ABC transmembrane type-1 domain. A run of 5 helical transmembrane segments spans residues 159–179 (LIVS…FQVV), 192–212 (LNII…LSGL), 270–290 (ALTS…MWYY), 296–316 (LVIL…SPIL), and 389–409 (VMVI…LSIG). Positions 469-704 (ISFKNIRFRY…SNGLYSYLHQ (236 aa)) constitute an ABC transporter domain. Position 503–510 (503–510 (GRSGSGKS)) interacts with ATP.

Belongs to the ABC transporter superfamily. Protein-1 exporter (TC 3.A.1.109) family. Homodimer.

It localises to the cell inner membrane. It carries out the reaction ATP + H2O + proteinSide 1 = ADP + phosphate + proteinSide 2.. Its function is as follows. Part of the ABC transporter complex LktBD involved in leukotoxin export. Transmembrane domains (TMD) form a pore in the inner membrane and the ATP-binding domain (NBD) is responsible for energy generation. In Mannheimia haemolytica (Pasteurella haemolytica), this protein is Leukotoxin translocation ATP-binding protein LktB (lktB).